The following is a 96-amino-acid chain: Acetolactate synthase isozyme 1 small subunit (96 aa).

The 74-residue stretch at 10-83 (ILELTVRNHP…DVVKVQRNQS (74 aa)) folds into the ACT domain.

Belongs to the acetolactate synthase small subunit family. Dimer of large and small chains.

It catalyses the reaction 2 pyruvate + H(+) = (2S)-2-acetolactate + CO2. It participates in amino-acid biosynthesis; L-isoleucine biosynthesis; L-isoleucine from 2-oxobutanoate: step 1/4. The protein operates within amino-acid biosynthesis; L-valine biosynthesis; L-valine from pyruvate: step 1/4. In Escherichia coli O157:H7, this protein is Acetolactate synthase isozyme 1 small subunit (ilvN).